The following is a 416-amino-acid chain: Probable protein phosphatase 2C 49 (416 aa).

Residues 91-411 enclose the PPM-type phosphatase domain; it reads RYGVTSVFGR…DNVSVVVVDL (321 aa). Mn(2+)-binding residues include aspartate 131, glycine 132, and aspartate 319. Residues 343–360 show a composition bias toward pro residues; sequence PPSPPGCSRPKAVLPPPA. The interval 343 to 368 is disordered; that stretch reads PPSPPGCSRPKAVLPPPAGASGGGGG. Aspartate 402 serves as a coordination point for Mn(2+).

Belongs to the PP2C family. Mg(2+) serves as cofactor. Requires Mn(2+) as cofactor.

The enzyme catalyses O-phospho-L-seryl-[protein] + H2O = L-seryl-[protein] + phosphate. The catalysed reaction is O-phospho-L-threonyl-[protein] + H2O = L-threonyl-[protein] + phosphate. The sequence is that of Probable protein phosphatase 2C 49 from Oryza sativa subsp. japonica (Rice).